A 421-amino-acid polypeptide reads, in one-letter code: Phosphoribosylamine--glycine ligase (421 aa).

In terms of domain architecture, ATP-grasp spans 108 to 314 (KEIMVKYNVP…FAQNIDDIMM (207 aa)). Residue 134–195 (IEEQGAPIVV…EEFLDGEEFS (62 aa)) coordinates ATP. Positions 284 and 286 each coordinate Mg(2+).

Belongs to the GARS family. Mg(2+) serves as cofactor. Requires Mn(2+) as cofactor.

It carries out the reaction 5-phospho-beta-D-ribosylamine + glycine + ATP = N(1)-(5-phospho-beta-D-ribosyl)glycinamide + ADP + phosphate + H(+). The protein operates within purine metabolism; IMP biosynthesis via de novo pathway; N(1)-(5-phospho-D-ribosyl)glycinamide from 5-phospho-alpha-D-ribose 1-diphosphate: step 2/2. The sequence is that of Phosphoribosylamine--glycine ligase from Streptococcus pyogenes serotype M6 (strain ATCC BAA-946 / MGAS10394).